We begin with the raw amino-acid sequence, 880 residues long: DNA mismatch repair protein MutS (880 aa).

Residue 605–612 (GPNMSGKS) participates in ATP binding. Positions 790 to 829 (QETAAVPSRGVEPPAPVIEPTPAKEQTPVKEQTTPLVEES) are disordered. A compositionally biased stretch (polar residues) spans 818-829 (VKEQTTPLVEES).

This sequence belongs to the DNA mismatch repair MutS family.

In terms of biological role, this protein is involved in the repair of mismatches in DNA. It is possible that it carries out the mismatch recognition step. This protein has a weak ATPase activity. This chain is DNA mismatch repair protein MutS, found in Limosilactobacillus fermentum (strain NBRC 3956 / LMG 18251) (Lactobacillus fermentum).